The sequence spans 187 residues: MRSRSFLVLVAVFLICETLVAQRLDRIRGPKGQGQDPVEGQDQDEGPGPVKVEILDIGQDPVKGQDPVKGQDPVKGQDPVKGQDLVKSQDPVKAELPDIGQDVVKGHEPVEGQDPVNAQLPDKVQDPVKAQPAVPGRFLLSKRGHCPRILFRCPLSNPSNKCWRDYDCPGVKKCCEGFCGKDCLYPK.

The signal sequence occupies residues 1–21 (MRSRSFLVLVAVFLICETLVA). Gln-22 carries the post-translational modification Pyrrolidone carboxylic acid. Residues 22–126 (QRLDRIRGPK…NAQLPDKVQD (105 aa)) constitute a propeptide that is removed on maturation. Positions 28 to 98 (RGPKGQGQDP…QDPVKAELPD (71 aa)) are disordered. 14 repeat units span residues 34–39 (GQDPVE), 40–45 (GQDQDE), 46–51 (GPGPVK), 58–63 (GQDPVK), 64–69 (GQDPVK), 70–75 (GQDPVK), 76–81 (GQDPVK), 82–87 (GQDLVK), 88–93 (SQDPVK), 100–105 (GQDVVK), 106–111 (GHEPVE), 112–117 (GQDPVN), 118–123 (AQLPDK), and 124–129 (VQDPVK). The 14 X 6 AA approximate tandem repeats stretch occupies residues 34–129 (GQDPVEGQDQ…LPDKVQDPVK (96 aa)). An SVP-1 clotting 1 repeat occupies 64–85 (GQDPVKGQDPVKGQDPVKGQDL). Positions 139-187 (LLSKRGHCPRILFRCPLSNPSNKCWRDYDCPGVKKCCEGFCGKDCLYPK) constitute a WAP domain. Cystine bridges form between Cys-146–Cys-175, Cys-153–Cys-179, Cys-162–Cys-174, and Cys-168–Cys-183.

In terms of processing, the short form (AA 127-187) may be an artifact due to the strongly acidic conditions of the duodenum. The pro-SPAI form may be the native form. As to expression, small intestine &gt; large intestine. The plasma contains the pro-SPAI form circulating.

Its function is as follows. Inhibits Na(+),K(+) ATPase by the competitive mode against Na(+). This chain is Sodium/potassium ATPase inhibitor SPAI-2, found in Sus scrofa (Pig).